We begin with the raw amino-acid sequence, 350 residues long: Ion-translocating oxidoreductase complex subunit D (350 aa).

Helical transmembrane passes span 25 to 45, 89 to 109, and 129 to 149; these read ILCA…GTVI, IPPL…IVIV, and VMLL…SVIA. At Thr185 the chain carries FMN phosphoryl threonine. 5 consecutive transmembrane segments (helical) span residues 212-232, 239-259, 264-284, 298-318, and 319-339; these read GFGV…LVML, WHIT…GYLL, FTGP…FFIA, LVFG…GGYP, and DAFA…DHYM.

It belongs to the NqrB/RnfD family. The complex is composed of six subunits: RnfA, RnfB, RnfC, RnfD, RnfE and RnfG. It depends on FMN as a cofactor.

The protein resides in the cell inner membrane. In terms of biological role, part of a membrane-bound complex that couples electron transfer with translocation of ions across the membrane. The polypeptide is Ion-translocating oxidoreductase complex subunit D (Shewanella sediminis (strain HAW-EB3)).